We begin with the raw amino-acid sequence, 2130 residues long: Bromodomain adjacent to zinc finger domain protein 2B (2130 aa).

Disordered regions lie at residues M1–A42, L82–G118, G151–P293, K491–N518, V543–G633, E756–E790, and R944–E966. The span at T8 to S33 shows a compositional bias: low complexity. A compositionally biased stretch (low complexity) spans E183–S206. The segment covering D207 to E234 has biased composition (acidic residues). Residues G250–T270 are compositionally biased toward basic and acidic residues. Positions Q272 to H283 are enriched in polar residues. Low complexity predominate over residues S284–P293. Over residues T492–P505 the composition is skewed to polar residues. Residues V543–D554 are compositionally biased toward basic and acidic residues. Over residues D555 to T611 the composition is skewed to acidic residues. Over residues T623–G633 the composition is skewed to low complexity. Positions V687–P762 constitute an MBD domain. A compositionally biased stretch (basic and acidic residues) spans E756–R775. The stretch at A797–K984 forms a coiled coil. Residues G1010–L1075 enclose the DDT domain. 4 disordered regions span residues T1186–V1265, S1431–S1454, V1499–M1545, and H1773–N1795. Positions S1220–K1244 are enriched in acidic residues. Residues E1245–V1254 are compositionally biased toward basic and acidic residues. The segment covering S1514–S1526 has biased composition (pro residues). The segment at K1895–K1945 adopts a PHD-type zinc-finger fold. Residues Q1957–K2019 form a disordered region. The segment covering G1991–E2002 has biased composition (basic and acidic residues). The span at V2004–F2014 shows a compositional bias: polar residues. One can recognise a Bromo domain in the interval R2022 to I2126.

Belongs to the WAL family.

It is found in the nucleus. Its function is as follows. Regulatory subunit of the ATP-dependent BRF-1 and BRF-5 ISWI chromatin remodeling complexes, which form ordered nucleosome arrays on chromatin and facilitate access to DNA during DNA-templated processes such as DNA replication, transcription, and repair. Both complexes regulate the spacing of nucleosomes along the chromatin and have the ability to slide mononucleosomes to the center of a DNA template. The BRF-1 ISWI chromatin remodeling complex has a lower ATP hydrolysis rate than the BRF-5 ISWI chromatin remodeling complex. Chromatin reader protein. Represses the expression of mitochondrial function-related genes, perhaps by transcriptional regulation. This is Bromodomain adjacent to zinc finger domain protein 2B (BAZ2B) from Gallus gallus (Chicken).